A 29-amino-acid polypeptide reads, in one-letter code: Varv peptide E (29 aa).

The segment at residues 1–29 (GLPICGETCVGGTCNTPGCSCSWPVCTRN) is a cross-link (cyclopeptide (Gly-Asn)). Disulfide bonds link C5/C19, C9/C21, and C14/C26.

In terms of processing, this is a cyclic peptide.

Probably participates in a plant defense mechanism. Has cytotoxic activity against human lymphoma U-937 GTB and human myeloma RPMI-8226/s cell lines. The sequence is that of Varv peptide E from Viola arvensis (European field pansy).